Here is a 334-residue protein sequence, read N- to C-terminus: Thiamine thiazole synthase (334 aa).

Substrate is bound by residues cysteine 86, 107 to 108 (EA), glycine 115, and valine 183. A 2,3-didehydroalanine (Cys) modification is found at cysteine 221. Substrate-binding positions include aspartate 223, histidine 238, methionine 290, and 300–302 (RMG).

Belongs to the THI4 family. In terms of assembly, homooctamer. It depends on Fe cation as a cofactor. In terms of processing, during the catalytic reaction, a sulfide is transferred from Cys-221 to a reaction intermediate, generating a dehydroalanine residue.

It localises to the cytoplasm. Its subcellular location is the nucleus. The enzyme catalyses [ADP-thiazole synthase]-L-cysteine + glycine + NAD(+) = [ADP-thiazole synthase]-dehydroalanine + ADP-5-ethyl-4-methylthiazole-2-carboxylate + nicotinamide + 3 H2O + 2 H(+). Functionally, involved in biosynthesis of the thiamine precursor thiazole. Catalyzes the conversion of NAD and glycine to adenosine diphosphate 5-(2-hydroxyethyl)-4-methylthiazole-2-carboxylic acid (ADT), an adenylated thiazole intermediate. The reaction includes an iron-dependent sulfide transfer from a conserved cysteine residue of the protein to a thiazole intermediate. The enzyme can only undergo a single turnover, which suggests it is a suicide enzyme. May have additional roles in adaptation to various stress conditions and in DNA damage tolerance. The chain is Thiamine thiazole synthase from Ajellomyces capsulatus (strain G186AR / H82 / ATCC MYA-2454 / RMSCC 2432) (Darling's disease fungus).